We begin with the raw amino-acid sequence, 459 residues long: MDPTAPLADTIAAIATAVVPEQGSVGIVRLSGSRALPIVQAIFTPARRNAVWESHRLLYGWIRDEKGQILDEALAVWMQAPRSYTREDVAELHCHGGIMVVQATLQQCLRQGARLAQPGEFSLRAFLNGRIDLTQAESVADLVAARSPQAARMALAGLQGKLGGSIRALRQELLGLLAEIEARLDFEEDLPPLDVAAWQARLQAIQTQIQALLATAERGQLLRTGVKVAIVGRPNVGKSSLLNAWSGQDRAIVTDLPGTTRDVVESHLVVKGIPVQLLDTAGIRATEDPVERLGVERSQRLAQAADVLVLVIDAQAGWTAADAAIYESIRHRPLILVINKTDLAPPEGIPLPPEIAHRVPAVAAQGKGIPELEEALEQLVTQGRPQPNLEISLNQRQAAALQQAQASLEQVGQAIQAQLPLDFWSIDLRGALHALGQITGEEISESVLDQIFSRFCIGK.

Residues Arg29, Glu91, and Arg130 each coordinate (6S)-5-formyl-5,6,7,8-tetrahydrofolate. The 157-residue stretch at Gly225 to Thr381 folds into the TrmE-type G domain. Asn235 provides a ligand contact to K(+). GTP-binding positions include Asn235–Ser240, Thr254–Thr260, and Asp279–Gly282. Ser239 contributes to the Mg(2+) binding site. K(+) is bound by residues Thr254, Leu256, and Thr259. Thr260 is a binding site for Mg(2+). (6S)-5-formyl-5,6,7,8-tetrahydrofolate is bound at residue Lys459.

The protein belongs to the TRAFAC class TrmE-Era-EngA-EngB-Septin-like GTPase superfamily. TrmE GTPase family. As to quaternary structure, homodimer. Heterotetramer of two MnmE and two MnmG subunits. Requires K(+) as cofactor.

The protein localises to the cytoplasm. Its function is as follows. Exhibits a very high intrinsic GTPase hydrolysis rate. Involved in the addition of a carboxymethylaminomethyl (cmnm) group at the wobble position (U34) of certain tRNAs, forming tRNA-cmnm(5)s(2)U34. In Synechococcus sp. (strain JA-2-3B'a(2-13)) (Cyanobacteria bacterium Yellowstone B-Prime), this protein is tRNA modification GTPase MnmE.